Here is a 79-residue protein sequence, read N- to C-terminus: Acyl carrier protein (79 aa).

One can recognise a Carrier domain in the interval 2 to 79 (ASKEEILAGL…QDAVDFIXGA (78 aa)). An O-(pantetheine 4'-phosphoryl)serine modification is found at Ser40.

The protein belongs to the acyl carrier protein (ACP) family. In terms of processing, 4'-phosphopantetheine is transferred from CoA to a specific serine of apo-ACP by AcpS. This modification is essential for activity because fatty acids are bound in thioester linkage to the sulfhydryl of the prosthetic group.

Its subcellular location is the cytoplasm. It functions in the pathway lipid metabolism; fatty acid biosynthesis. Functionally, carrier of the growing fatty acid chain in fatty acid biosynthesis. The sequence is that of Acyl carrier protein from Myxococcus xanthus.